The following is a 64-amino-acid chain: Large ribosomal subunit protein uL29 (64 aa).

Belongs to the universal ribosomal protein uL29 family.

The polypeptide is Large ribosomal subunit protein uL29 (Lacticaseibacillus paracasei (strain ATCC 334 / BCRC 17002 / CCUG 31169 / CIP 107868 / KCTC 3260 / NRRL B-441) (Lactobacillus paracasei)).